The primary structure comprises 69 residues: MKTVLIVLLRFYRYAISPMLGRNCRFHPSCSEYAIEAVQRHGAVRGAWLAARRVARCHPFHPGGYDPVP.

The protein belongs to the UPF0161 family.

Its subcellular location is the cell inner membrane. Functionally, could be involved in insertion of integral membrane proteins into the membrane. This Azoarcus sp. (strain BH72) protein is Putative membrane protein insertion efficiency factor.